A 664-amino-acid polypeptide reads, in one-letter code: E3 ubiquitin-protein ligase RNF139 (664 aa).

Residue Ala-2 is modified to N-acetylalanine. 12 helical membrane-spanning segments follow: residues 51 to 71 (IVLQIFLRLFGVFASSIVLIL), 85 to 105 (AFLLAATSVLVNYYASLHIDF), 125 to 145 (SLWMALIVLQLTFGIGYVTLL), 154 to 174 (LIILDLLVPVIGLITELPLHI), 178 to 198 (LLFTSSLILTLNTVFVLAVKL), 293 to 313 (GMSAVISSVAHYLGLGILAFI), 323 to 343 (LGFVAPVLFFILALQTGLSGL), 356 to 376 (MCLLLTAVLHFIHGMTDPVLM), 390 to 410 (FPVLFVSACLFILPVLLSYVL), 420 to 440 (LFAVTAFCVELCLKVIVSLTV), 469 to 489 (SIIEFIFGVVMFGNGAYTMMF), and 495 to 512 (IRAFMMCLHAYFNIYLQA). The segment at 547-586 (CAICYHEFTTSARITPCNHYFHALCLRKWLYIQDTCPMCH) adopts an RING-type; atypical zinc-finger fold. The segment at 601–664 (VSNNNGFIPP…AAEEFNDDTD (64 aa)) is disordered. Over residues 616–628 (EAVREAAAESDRE) the composition is skewed to basic and acidic residues. A compositionally biased stretch (acidic residues) spans 629–639 (LNEDDSTDCDD). Ser-634 carries the phosphoserine modification. Residues Thr-635 and Thr-663 each carry the phosphothreonine modification.

As to quaternary structure, interacts with MHC class I and HM13. Interacts with VHL. Component of SCAP-SREBP complex composed of SREBF2, SCAP and RNF139; the complex hampers the interaction between SCAP and SEC24B, thereby reducing SREBF2 proteolytic processing. Interacts with SREBF2 (via C-terminal domain). Interacts with SCAP; the interaction inhibits the interaction of SCAP with SEC24B and hampering the ER to Golgi transport of the SCAP-SREBP complex. Interacts with SEC24B. Interacts with INSIG1 and INSIG2. Interacts with EIF3F and EIF3H; the interaction leads to protein translation inhibitions in a ubiquitination-dependent manner. Interacts with XBP1 isoform 1; the interaction induces ubiquitination and degradation of XBP1 isoform 1. Interacts with AUP1, AMFR and UBE2G2; interaction with AUP1 facilitates interaction of RNF139 with ubiquitin-conjugating enzyme UBE2G2 and ubiquitin ligase AMFR/gp78, leading to sterol-induced ubiquitination of HMGCR and its subsequent proteasomal degradation. Autoubiquitinated. Ubiquitination is induced by sterol and leads to ist degradation via the ubiquitin-proteasome pathway. Highly expressed in testis, placenta and adrenal gland. Moderate expression in heart, brain, liver, skeletal muscle and pancreas, and low expression in lung and kidney.

Its subcellular location is the endoplasmic reticulum membrane. The enzyme catalyses S-ubiquitinyl-[E2 ubiquitin-conjugating enzyme]-L-cysteine + [acceptor protein]-L-lysine = [E2 ubiquitin-conjugating enzyme]-L-cysteine + N(6)-ubiquitinyl-[acceptor protein]-L-lysine.. Its pathway is protein modification; protein ubiquitination. In terms of biological role, E3-ubiquitin ligase; acts as a negative regulator of cell proliferation through mechanisms involving G2/M arrest and cell death. Required for MHC class I ubiquitination in cells expressing the cytomegalovirus protein US2 before dislocation from the endoplasmic reticulum (ER). Affects SREBP processing by hindering the SREBP-SCAP complex translocation from the ER to the Golgi, thereby reducing SREBF2 target gene expression. Involved in the sterol-accelerated degradation of HMGCR. This is achieved through binding of RNF139 to INSIG1 and/or INSIG2 at the ER membrane. In addition, interaction of RNF139 with AUP1 facilitates interaction of RNF139 with ubiquitin-conjugating enzyme UBE2G2 and ubiquitin ligase AMFR, leading to ubiquitination of HMGCR. The ubiquitinated HMGCR is then released from the ER into the cytosol for subsequent destruction. Required for INSIG1 ubiquitination. May be required for EIF3 complex ubiquitination. The polypeptide is E3 ubiquitin-protein ligase RNF139 (Homo sapiens (Human)).